We begin with the raw amino-acid sequence, 491 residues long: Interferon regulatory factor 3 (491 aa).

A DNA-binding region (IRF tryptophan pentad repeat) is located at residues 12–116 (KLRFGPWLLN…DPHKVYAVAS (105 aa)).

The protein belongs to the IRF family. In terms of tissue distribution, widely expressed with higher expression in lung, spleen and intestine.

It localises to the cytoplasm. The protein resides in the nucleus. In terms of biological role, key transcriptional regulator of type I interferon (IFN)-dependent immune responses which plays a critical role in the innate immune response against DNA and RNA viruses. Regulates the transcription of type I IFN genes (IFN-alpha and IFN-beta) and IFN-stimulated genes (ISG) by binding to an interferon-stimulated response element (ISRE) in their promoters. May activate transcription by complex formation with other transcriptional factors, possibly members of the STAT family. Binds specifically to the IFN-stimulated response element (ISRE) but not to the IRF-1 binding site PRD-I. The protein is Interferon regulatory factor 3 (IRF3) of Gallus gallus (Chicken).